The sequence spans 276 residues: Glutamate 5-kinase (276 aa).

Position 14 (K14) interacts with ATP. The substrate site is built by S54, D141, and N157. Residues 177–178 (SD) and 219–225 (TGGMLTK) contribute to the ATP site.

This sequence belongs to the glutamate 5-kinase family.

It localises to the cytoplasm. The catalysed reaction is L-glutamate + ATP = L-glutamyl 5-phosphate + ADP. The protein operates within amino-acid biosynthesis; L-proline biosynthesis; L-glutamate 5-semialdehyde from L-glutamate: step 1/2. Functionally, catalyzes the transfer of a phosphate group to glutamate to form L-glutamate 5-phosphate. This Listeria monocytogenes serovar 1/2a (strain ATCC BAA-679 / EGD-e) protein is Glutamate 5-kinase.